A 503-amino-acid polypeptide reads, in one-letter code: Probable cytosol aminopeptidase (503 aa).

The Mn(2+) site is built by Lys270 and Asp275. Residue Lys282 is part of the active site. Mn(2+)-binding residues include Asp293, Asp352, and Glu354. Residue Arg356 is part of the active site.

The protein belongs to the peptidase M17 family. Mn(2+) serves as cofactor.

It is found in the cytoplasm. The catalysed reaction is Release of an N-terminal amino acid, Xaa-|-Yaa-, in which Xaa is preferably Leu, but may be other amino acids including Pro although not Arg or Lys, and Yaa may be Pro. Amino acid amides and methyl esters are also readily hydrolyzed, but rates on arylamides are exceedingly low.. It carries out the reaction Release of an N-terminal amino acid, preferentially leucine, but not glutamic or aspartic acids.. In terms of biological role, presumably involved in the processing and regular turnover of intracellular proteins. Catalyzes the removal of unsubstituted N-terminal amino acids from various peptides. This chain is Probable cytosol aminopeptidase, found in Yersinia pseudotuberculosis serotype O:1b (strain IP 31758).